The primary structure comprises 130 residues: Putative F-box protein At1g77880 (130 aa).

The region spanning 18–64 is the F-box domain; that stretch reads KVSIPYLPDDLLLNCLARISRLYYPTLSLVSKRFRSLLASTELYETR.

This is Putative F-box protein At1g77880 from Arabidopsis thaliana (Mouse-ear cress).